A 98-amino-acid polypeptide reads, in one-letter code: DNA-binding protein Fis (98 aa).

The segment at residues 74–93 (QTRAALMMGINRGTLRKKLK) is a DNA-binding region (H-T-H motif).

This sequence belongs to the transcriptional regulatory Fis family. In terms of assembly, homodimer.

Its function is as follows. Activates ribosomal RNA transcription. Plays a direct role in upstream activation of rRNA promoters. The protein is DNA-binding protein Fis of Yersinia enterocolitica serotype O:8 / biotype 1B (strain NCTC 13174 / 8081).